The following is a 432-amino-acid chain: Glutamate-1-semialdehyde 2,1-aminomutase (432 aa).

The residue at position 270 (Lys-270) is an N6-(pyridoxal phosphate)lysine.

It belongs to the class-III pyridoxal-phosphate-dependent aminotransferase family. HemL subfamily. In terms of assembly, homodimer. Requires pyridoxal 5'-phosphate as cofactor.

The protein resides in the cytoplasm. The catalysed reaction is (S)-4-amino-5-oxopentanoate = 5-aminolevulinate. Its pathway is porphyrin-containing compound metabolism; protoporphyrin-IX biosynthesis; 5-aminolevulinate from L-glutamyl-tRNA(Glu): step 2/2. In Acinetobacter baylyi (strain ATCC 33305 / BD413 / ADP1), this protein is Glutamate-1-semialdehyde 2,1-aminomutase.